Consider the following 163-residue polypeptide: MADDPHKTIYVLNGPNLNLLGTREPETYGHATLADVERLCVETATRFGLVAECRQSNHEGVLVDCVHEARVKGVAGIILNAGAYSHTSIALHDALMGVKIPTVEVHISNIHARESFRHHSFTAKAAFASICGFGIDGYRLAITGLAAKIGATTDTKTDITAQA.

The Proton acceptor role is filled by tyrosine 28. Asparagine 80, histidine 86, and aspartate 93 together coordinate substrate. The active-site Proton donor is histidine 106. Residues isoleucine 107–serine 108 and arginine 117 contribute to the substrate site.

It belongs to the type-II 3-dehydroquinase family. As to quaternary structure, homododecamer.

It catalyses the reaction 3-dehydroquinate = 3-dehydroshikimate + H2O. It participates in metabolic intermediate biosynthesis; chorismate biosynthesis; chorismate from D-erythrose 4-phosphate and phosphoenolpyruvate: step 3/7. Its function is as follows. Catalyzes a trans-dehydration via an enolate intermediate. The protein is 3-dehydroquinate dehydratase of Bradyrhizobium sp. (strain BTAi1 / ATCC BAA-1182).